We begin with the raw amino-acid sequence, 605 residues long: Capsid scaffolding protein (605 aa).

Catalysis depends on charge relay system residues His-48, Ser-116, and His-139. Residues 235 to 274 (ASDAPDLQKPDKALQSPPPASTDPATMLSGNAGEGATACG) are disordered. Residues 281–300 (QDLISVPRNTFMTLLQTNLD) form an interaction with pAP region. 2 disordered regions span residues 403–431 (DYVP…FPGE) and 489–588 (PHQS…KSVS). The short motif at 410–416 (RSNKRKR) is the Nuclear localization signal element. The span at 568 to 579 (ASASGVAQSKEP) shows a compositional bias: polar residues. The tract at residues 585–605 (KSVSAHLKSIFCEELLNKRVA) is interaction with major capsid protein.

This sequence belongs to the herpesviridae capsid scaffolding protein family. As to quaternary structure, homomultimer. Interacts with major capsid protein. Exists in a monomer-dimer equilibrium with the dimer being the active species. Capsid scaffolding protein is cleaved by assemblin after formation of the spherical procapsid. As a result, the capsid obtains its mature, icosahedral shape. Cleavages occur at two or more sites: release (R-site) and maturation (M-site).

Its subcellular location is the host cytoplasm. It localises to the host nucleus. It catalyses the reaction Cleaves -Ala-|-Ser- and -Ala-|-Ala- bonds in the scaffold protein.. Functionally, acts as a scaffold protein by binding major capsid protein in the cytoplasm, inducing the nuclear localization of both proteins. Multimerizes in the nucleus such as major capsid protein forms the icosahedral T=16 capsid. Autocatalytic cleavage releases the assembly protein, and subsequently abolishes interaction with major capsid protein. Cleavages products are evicted from the capsid before or during DNA packaging. In terms of biological role, protease that plays an essential role in virion assembly within the nucleus. Catalyzes the cleavage of the assembly protein after formation of the spherical procapsid. By that cleavage, the capsid matures and gains its icosahedral shape. The cleavage sites seem to include -Ala-Ser-, -Ala-Ala-, as well as Ala-Thr bonds. Assemblin and cleavages products are evicted from the capsid before or during DNA packaging. Plays a major role in capsid assembly. Acts as a scaffold protein by binding major capsid protein. Multimerizes in the nucleus such as major capsid protein forms the icosahedral T=16 capsid. Cleaved by assemblin after capsid completion. The cleavages products are evicted from the capsid before or during DNA packaging. In Homo sapiens (Human), this protein is Capsid scaffolding protein.